We begin with the raw amino-acid sequence, 405 residues long: Cytoplasmic polyadenylated homeobox-like protein (405 aa).

2 disordered regions span residues 1–33 (MNLDGTSGGFPAEEDHHNEERQTKNKRKTKHRH) and 340–363 (PWDLGKQWSSAQSQLQSQLPQNNG). Over residues 13–23 (EEDHHNEERQT) the composition is skewed to basic and acidic residues. A compositionally biased stretch (basic residues) spans 24-33 (KNKRKTKHRH). The segment at residues 28 to 87 (KTKHRHKFSEELLQELKEIFGENCYPDYTTRKTLAIKFDCPVNVIDNWFQNKRARLPPAE) is a DNA-binding region (homeobox). Low complexity predominate over residues 346–360 (QWSSAQSQLQSQLPQ).

It localises to the nucleus. Its function is as follows. Transcription factor that acts as activator. The sequence is that of Cytoplasmic polyadenylated homeobox-like protein from Homo sapiens (Human).